The primary structure comprises 263 residues: Protein IQ-DOMAIN 9 (263 aa).

The disordered stretch occupies residues Ser16–Leu41. The short motif at Glu21–Val28 is the Nuclear localization signal 1 element. Residues Thr25–Gly38 are compositionally biased toward basic residues. The IQ domain maps to Glu46 to Ala75. The segment at Ala59–Ser78 is calmodulin-binding. Positions Ala107 to Thr114 match the Nuclear localization signal 2 motif. The disordered stretch occupies residues Thr216–Ala263. Positions Asp226–Pro241 are enriched in polar residues.

The protein belongs to the IQD family. As to quaternary structure, binds to multiple calmodulin (CaM) in the presence of Ca(2+) and CaM-like proteins.

The protein resides in the nucleus. It localises to the nuclear body. May be involved in cooperative interactions with calmodulins or calmodulin-like proteins. Recruits calmodulin proteins to microtubules, thus being a potential scaffold in cellular signaling and trafficking. May associate with nucleic acids and regulate gene expression at the transcriptional or post-transcriptional level. This is Protein IQ-DOMAIN 9 from Arabidopsis thaliana (Mouse-ear cress).